A 245-amino-acid chain; its full sequence is Probable transcriptional regulatory protein APH_0480 (245 aa).

It belongs to the TACO1 family.

The protein resides in the cytoplasm. This is Probable transcriptional regulatory protein APH_0480 from Anaplasma phagocytophilum (strain HZ).